A 504-amino-acid polypeptide reads, in one-letter code: Catalase (504 aa).

The segment at 1–25 is disordered; that stretch reads MSKQDGKLTGLFGAPVSDRENSMTA. Catalysis depends on residues H56 and N129. Y339 contributes to the heme binding site.

The protein belongs to the catalase family. In terms of assembly, homodimer. Heme serves as cofactor.

It carries out the reaction 2 H2O2 = O2 + 2 H2O. Its function is as follows. Decomposes hydrogen peroxide into water and oxygen; serves to protect cells from the toxic effects of hydrogen peroxide. In Staphylococcus epidermidis (strain ATCC 35984 / DSM 28319 / BCRC 17069 / CCUG 31568 / BM 3577 / RP62A), this protein is Catalase (katA).